Consider the following 117-residue polypeptide: Large ribosomal subunit protein bL20 (117 aa).

The protein belongs to the bacterial ribosomal protein bL20 family.

Its function is as follows. Binds directly to 23S ribosomal RNA and is necessary for the in vitro assembly process of the 50S ribosomal subunit. It is not involved in the protein synthesizing functions of that subunit. The protein is Large ribosomal subunit protein bL20 of Leptospira borgpetersenii serovar Hardjo-bovis (strain JB197).